Reading from the N-terminus, the 209-residue chain is N-(5'-phosphoribosyl)anthranilate isomerase (209 aa).

It belongs to the TrpF family.

It carries out the reaction N-(5-phospho-beta-D-ribosyl)anthranilate = 1-(2-carboxyphenylamino)-1-deoxy-D-ribulose 5-phosphate. The protein operates within amino-acid biosynthesis; L-tryptophan biosynthesis; L-tryptophan from chorismate: step 3/5. This Pelobacter propionicus (strain DSM 2379 / NBRC 103807 / OttBd1) protein is N-(5'-phosphoribosyl)anthranilate isomerase.